Here is a 158-residue protein sequence, read N- to C-terminus: Large ribosomal subunit protein uL30 (158 aa).

This sequence belongs to the universal ribosomal protein uL30 family. In terms of assembly, part of the 50S ribosomal subunit.

The protein is Large ribosomal subunit protein uL30 of Saccharolobus solfataricus (strain ATCC 35092 / DSM 1617 / JCM 11322 / P2) (Sulfolobus solfataricus).